Consider the following 165-residue polypeptide: UPF0114 protein Ent638_3411 (165 aa).

The next 3 membrane-spanning stretches (helical) occupy residues leucine 15 to phenylalanine 35, leucine 53 to valine 73, and leucine 136 to leucine 156.

It belongs to the UPF0114 family.

The protein resides in the cell membrane. This Enterobacter sp. (strain 638) protein is UPF0114 protein Ent638_3411.